The following is a 209-amino-acid chain: MARNTGPLCKLCRREGMKLYLKGERCFSEKCPFDKRPFAPGQHGREKKKLTQYALQLRAKQTMKRIYGVLEKQFRIYYERAVKQSGDTRENLVAQVERRLDNVVYRLGFAINRRAARQLVSHGHVLVNGKKVDIPSYQVRPGDVISIKEGSRTIEPIKQAIELNKGRAISNWLEVDYDQFKGVYVRNPKLEEIIDLPVNVQAIVEFYSR.

The region spanning 98–166 is the S4 RNA-binding domain; sequence RRLDNVVYRL…IKQAIELNKG (69 aa).

It belongs to the universal ribosomal protein uS4 family. In terms of assembly, part of the 30S ribosomal subunit. Contacts protein S5. The interaction surface between S4 and S5 is involved in control of translational fidelity.

Functionally, one of the primary rRNA binding proteins, it binds directly to 16S rRNA where it nucleates assembly of the body of the 30S subunit. With S5 and S12 plays an important role in translational accuracy. The chain is Small ribosomal subunit protein uS4 from Fervidobacterium nodosum (strain ATCC 35602 / DSM 5306 / Rt17-B1).